The chain runs to 303 residues: CDAN1-interacting nuclease 1 (303 aa).

It is found in the nucleus. It localises to the cytoplasm. Functionally, may play a role in erythroid cell differentiation. The chain is CDAN1-interacting nuclease 1 from Xenopus laevis (African clawed frog).